Consider the following 126-residue polypeptide: Small ribosomal subunit protein uS12 (126 aa).

A compositionally biased stretch (polar residues) spans 1 to 16 (MPTVNQLVRQGRTMNK). Positions 1–24 (MPTVNQLVRQGRTMNKTKTKSPAL) are disordered. Asp-89 bears the 3-methylthioaspartic acid mark.

This sequence belongs to the universal ribosomal protein uS12 family. Part of the 30S ribosomal subunit. Contacts proteins S8 and S17. May interact with IF1 in the 30S initiation complex.

With S4 and S5 plays an important role in translational accuracy. Functionally, interacts with and stabilizes bases of the 16S rRNA that are involved in tRNA selection in the A site and with the mRNA backbone. Located at the interface of the 30S and 50S subunits, it traverses the body of the 30S subunit contacting proteins on the other side and probably holding the rRNA structure together. The combined cluster of proteins S8, S12 and S17 appears to hold together the shoulder and platform of the 30S subunit. This chain is Small ribosomal subunit protein uS12, found in Elusimicrobium minutum (strain Pei191).